The following is a 635-amino-acid chain: UvrABC system protein C (635 aa).

The GIY-YIG domain occupies 20-97; sequence ERSGVYRMFD…IKKFQPKFNI (78 aa). Positions 207–242 constitute a UVR domain; it reads KELQENLSKKMEELSEQMRFEEAAEIRDRIKALSYV.

It belongs to the UvrC family. In terms of assembly, interacts with UvrB in an incision complex.

It localises to the cytoplasm. In terms of biological role, the UvrABC repair system catalyzes the recognition and processing of DNA lesions. UvrC both incises the 5' and 3' sides of the lesion. The N-terminal half is responsible for the 3' incision and the C-terminal half is responsible for the 5' incision. The sequence is that of UvrABC system protein C from Rickettsia bellii (strain RML369-C).